Consider the following 156-residue polypeptide: Protein-export protein SecB (156 aa).

It belongs to the SecB family. As to quaternary structure, homotetramer, a dimer of dimers. One homotetramer interacts with 1 SecA dimer.

It is found in the cytoplasm. Functionally, one of the proteins required for the normal export of preproteins out of the cell cytoplasm. It is a molecular chaperone that binds to a subset of precursor proteins, maintaining them in a translocation-competent state. It also specifically binds to its receptor SecA. The polypeptide is Protein-export protein SecB (Pectobacterium carotovorum subsp. carotovorum (strain PC1)).